A 676-amino-acid chain; its full sequence is Double-stranded RNA-specific editase Adar (676 aa).

The interval 1 to 51 is disordered; sequence MKFDSRVMLNSANNNSPQHPVSAPSDINMNGYNRKLPQKRGYEMPKYSDPK. The segment covering 8 to 31 has biased composition (polar residues); the sequence is MLNSANNNSPQHPVSAPSDINMNG. Basic and acidic residues predominate over residues 40 to 51; sequence RGYEMPKYSDPK. DRBM domains lie at 61-127 and 197-272; these read QPKN…SFIQ and ITVD…SLCN. One can recognise an A to I editase domain in the interval 348–672; the sequence is SVSTGTKCVS…LKKPIEQDEF (325 aa). His-372 is a binding site for Zn(2+). Glu-374 acts as the Proton donor in catalysis. Zn(2+)-binding residues include Cys-430 and Cys-493.

As to expression, expressed in embryonic nervous system; late stage 13 sees ventral nerve cord expression which spreads to brain by stage 16. Expression is maintained through to adulthood.

Its function is as follows. Has A-to-I RNA editing activity on extended dsRNA: edits RNA-binding protein Rnp4F. A-to-I editing of pre-mRNAs acts predominantly through nervous system targets to affect adult nervous system integrity, function and behavior. Essential for adaptation to environmental stresses, such as oxygen deprivation, and for the prevention of premature neuronal degeneration, through the editing of ion channels as targets. The sequence is that of Double-stranded RNA-specific editase Adar from Drosophila melanogaster (Fruit fly).